Here is a 475-residue protein sequence, read N- to C-terminus: Ribulose bisphosphate carboxylase large chain (475 aa).

A propeptide spanning residues 1–2 (MS) is cleaved from the precursor. Proline 3 carries the post-translational modification N-acetylproline. N6,N6,N6-trimethyllysine is present on lysine 14. Substrate-binding residues include asparagine 123 and threonine 173. The active-site Proton acceptor is the lysine 175. Substrate is bound at residue lysine 177. Mg(2+)-binding residues include lysine 201, aspartate 203, and glutamate 204. An N6-carboxylysine modification is found at lysine 201. Histidine 294 acts as the Proton acceptor in catalysis. 3 residues coordinate substrate: arginine 295, histidine 327, and serine 379.

Belongs to the RuBisCO large chain family. Type I subfamily. Heterohexadecamer of 8 large chains and 8 small chains; disulfide-linked. The disulfide link is formed within the large subunit homodimers. The cofactor is Mg(2+). In terms of processing, the disulfide bond which can form in the large chain dimeric partners within the hexadecamer appears to be associated with oxidative stress and protein turnover.

It is found in the plastid. It localises to the chloroplast. The enzyme catalyses 2 (2R)-3-phosphoglycerate + 2 H(+) = D-ribulose 1,5-bisphosphate + CO2 + H2O. It carries out the reaction D-ribulose 1,5-bisphosphate + O2 = 2-phosphoglycolate + (2R)-3-phosphoglycerate + 2 H(+). RuBisCO catalyzes two reactions: the carboxylation of D-ribulose 1,5-bisphosphate, the primary event in carbon dioxide fixation, as well as the oxidative fragmentation of the pentose substrate in the photorespiration process. Both reactions occur simultaneously and in competition at the same active site. This chain is Ribulose bisphosphate carboxylase large chain, found in Corylus cornuta (Beaked hazel).